A 95-amino-acid chain; its full sequence is Large ribosomal subunit protein uL23 (95 aa).

Belongs to the universal ribosomal protein uL23 family. Part of the 50S ribosomal subunit. Contacts protein L29, and trigger factor when it is bound to the ribosome.

One of the early assembly proteins it binds 23S rRNA. One of the proteins that surrounds the polypeptide exit tunnel on the outside of the ribosome. Forms the main docking site for trigger factor binding to the ribosome. The chain is Large ribosomal subunit protein uL23 from Syntrophotalea carbinolica (strain DSM 2380 / NBRC 103641 / GraBd1) (Pelobacter carbinolicus).